Consider the following 194-residue polypeptide: Serine/threonine-protein kinase mos (194 aa).

The region spanning 47–194 is the Protein kinase domain; the sequence is LCLLHLLGSG…HLDLKPANIF (148 aa). ATP contacts are provided by residues 53–61 and Lys-74; that span reads LGSGGFGSV. Residue Asp-187 is the Proton acceptor of the active site.

Belongs to the protein kinase superfamily. Ser/Thr protein kinase family.

It catalyses the reaction L-seryl-[protein] + ATP = O-phospho-L-seryl-[protein] + ADP + H(+). The enzyme catalyses L-threonyl-[protein] + ATP = O-phospho-L-threonyl-[protein] + ADP + H(+). The chain is Serine/threonine-protein kinase mos (MOS) from Atheris squamigera (Variable bush viper).